A 149-amino-acid polypeptide reads, in one-letter code: NPC intracellular cholesterol transporter 2 (149 aa).

The N-terminal stretch at 1-19 is a signal peptide; the sequence is MHFLAAAFLLLTLSASALA. Intrachain disulfides connect cysteine 27/cysteine 140, cysteine 42/cysteine 47, and cysteine 93/cysteine 99. Asparagine 58 carries an N-linked (GlcNAc...) asparagine glycan. Position 116 is an N6-acetyllysine (lysine 116).

This sequence belongs to the NPC2 family. As to quaternary structure, interacts with NPC1 (via the second lumenal domain) in a cholestrol-dependent manner. Interacts with NUS1/NgBR, the interaction stabilizes NCP2 and regulates cholesterol trafficking. Interacts with DHDDS. Interacts with NEDD4L (via C2 domain). Interacts with NPC1L1. N-glycosylated. Found in the epididymal fluid as a 19 kDa glycoprotein that is processed during its passage through the epididymis into a 16 kDa protein. Found in the fluid from the distal caput to cauda epididymis, not detected in the rete testis and the proximal and middle caput epididymal fluids (at protein level).

The protein localises to the secreted. It localises to the endoplasmic reticulum. Its subcellular location is the lysosome. It carries out the reaction cholesterol(in) = cholesterol(out). Intracellular cholesterol transporter which acts in concert with NPC1 and plays an important role in the egress of cholesterol from the lysosomal compartment. Unesterified cholesterol that has been released from LDLs in the lumen of the late endosomes/lysosomes is transferred by NPC2 to the cholesterol-binding pocket in the N-terminal domain of NPC1. May bind and mobilize cholesterol that is associated with membranes. NPC2 binds cholesterol with a 1:1 stoichiometry. Can bind a variety of sterols, including lathosterol, desmosterol and the plant sterols stigmasterol and beta-sitosterol. The secreted form of NCP2 regulates biliary cholesterol secretion via stimulation of ABCG5/ABCG8-mediated cholesterol transport. The polypeptide is NPC intracellular cholesterol transporter 2 (Sus scrofa (Pig)).